The following is an 828-amino-acid chain: E3 ubiquitin-protein ligase bre-1 (828 aa).

The segment at 1–25 (MMKRNNEGIGGEGVANSPPDDTQQK) is disordered. The interaction with ubc-1 stretch occupies residues 1 to 309 (MMKRNNEGIG…SREIEALRAD (309 aa)). 2 coiled-coil regions span residues 53–92 (QAAKLRQTVLIKNKRISDLERENERAKRRQLTDESNFLKV) and 185–251 (HKEL…TEKQ). A compositionally biased stretch (low complexity) spans 269-298 (ASGNATASSSATLNQSEKKMGSPGSPPSES). Positions 269–304 (ASGNATASSSATLNQSEKKMGSPGSPPSESTSREIE) are disordered. Coiled coils occupy residues 311–345 (DEQAAIAARRLQELEDTNRKLQSMAQDISKLKMET), 460–616 (VNTL…RNLK), and 660–756 (DEVL…NDSA). An RING-type zinc finger spans residues 776–815 (CPSCKTRPKDCIMLKCYHLFCETCIKTMYDTRQRKCPKCN).

The protein belongs to the BRE1 family. As to quaternary structure, interacts with ubc-1. Interacts with mrg-1.

The protein resides in the nucleus. The catalysed reaction is S-ubiquitinyl-[E2 ubiquitin-conjugating enzyme]-L-cysteine + [acceptor protein]-L-lysine = [E2 ubiquitin-conjugating enzyme]-L-cysteine + N(6)-ubiquitinyl-[acceptor protein]-L-lysine.. Its pathway is protein modification; protein ubiquitination. E3 ubiquitin-protein ligase that mediates monoubiquitination of 'Lys-117' of histone H2B. H2B 'Lys-117' ubiquitination gives a specific tag for epigenetic transcriptional activation and is also prerequisite for histone H3 'Lys-4' and 'Lys-79' methylation. Involved in regulating stem cell proliferative fate. The protein is E3 ubiquitin-protein ligase bre-1 of Caenorhabditis briggsae.